A 599-amino-acid chain; its full sequence is MNQNARPHIEKILANLTQLPGVYKMLGKEGELLYVGKAKNLKNRVSSYFVKTIEHPKTQALVARIYDIETLVTRSETEALLLEQNLIKQHRPPYNIMLRDDKSYVYIFVSADKPYPRIASGRGKGKHQIGKFFGPYPSAYSARDTLLVLQKLFNVRQCENSYFSQRKRPCLQYQIKRCSAPCVGLVSPEDYKEDVNNSIRFLQGDTKELNQELIAKMEQAAADLEFEKAVFYRDRLSLLREVQAQQAVFKVKGEADILAITYQAGVTCVQIMHVRNGRMLGGKSYFPDMLGDDLGQMLSDFMANFYFQVADEVPSELIVNTALPDRKELEEALAQQFGKKVQIKSSVRETRAEWLELAEMNVQHAIKGQLSNHLELNERFHQLEQVVGRPIDRIECFDISHTMGEAPIASCVVFDQGGARKRDYRQFAIQDITAGDDYAAMRQALTRRYKKAMLPDLLLIDGGKGQLHMAMEVMQELGLEAFMVGVSKGEGRKPGLETLHFTDGTKIQLPEDSKALHLIQQVRDEAHRFAITKHRAKRDKRRSTSVLEAIPGLGPKRRRDLLTHFGGIQGVLKASEKELTVVPGLGEVMARTIYKILHE.

Residues Q18–I96 enclose the GIY-YIG domain. The UVR domain maps to K207–V242.

It belongs to the UvrC family. As to quaternary structure, interacts with UvrB in an incision complex.

The protein localises to the cytoplasm. Functionally, the UvrABC repair system catalyzes the recognition and processing of DNA lesions. UvrC both incises the 5' and 3' sides of the lesion. The N-terminal half is responsible for the 3' incision and the C-terminal half is responsible for the 5' incision. The polypeptide is UvrABC system protein C (Acinetobacter baumannii (strain SDF)).